Reading from the N-terminus, the 383-residue chain is GTP-binding protein 10 (383 aa).

The region spanning 13-148 is the Obg domain; it reads GNFIDNLRIY…RIIHLDLKLI (136 aa). The OBG-type G domain occupies 149–344; the sequence is SDVGLVGFPN…LIGCIRKTMD (196 aa). GTP-binding positions include 155–162, 202–206, and 278–281; these read GFPNAGKS, DLPGL, and NKMD. The tract at residues 362–383 is disordered; that stretch reads LQKETSRTVKRNLKNSPQRTHH. Residues 369–383 are compositionally biased toward basic residues; that stretch reads TVKRNLKNSPQRTHH.

Belongs to the TRAFAC class OBG-HflX-like GTPase superfamily. OBG GTPase family.

It is found in the nucleus. The protein resides in the nucleolus. Functionally, may be involved in the ribosome maturation process. The polypeptide is GTP-binding protein 10 (gtpbp10) (Xenopus tropicalis (Western clawed frog)).